The chain runs to 352 residues: Staphylococcal superantigen-like 3 (352 aa).

The N-terminal stretch at 1–30 (MKMRTIAKTSLALGLLTTGAITVTTQSVKA) is a signal peptide. Residues 61-165 (ATTQAANTRQ…TIKQAQTDMT (105 aa)) form a disordered region. Basic and acidic residues predominate over residues 69–104 (RQERTPKLEKAPNTNEEKTSASKIEKISQPKQEEQK). The span at 114-141 (PKQEQSQTTTESTTPKTKVTTPPSTNTP) shows a compositional bias: low complexity. A compositionally biased stretch (polar residues) spans 142–164 (QPMQSTKSDTPQSPTIKQAQTDM). Residues 228–326 (IDVFIVLEDN…VIKMKNGGKY (99 aa)) form a sialyl Lewis X-binding region.

This sequence belongs to the staphylococcal/streptococcal toxin family. As to quaternary structure, interacts with host TLR2 (via its extracellular domain).

Its subcellular location is the secreted. In terms of biological role, secreted protein that plays an essential role in immune innate response inhibition by interacting with and inhibiting host TLR2. In turn, bacteria recognition by immune cells is impaired and cytokine production is inhibited. Mechanistically, by interacting with TLR2, blocks ligand binding and thus inhibits activation. Second, by interacting with an already formed TLR2-lipopeptide complex, prevents TLR heterodimerization and downstream signaling. The interaction with host TLR2 does not involve sialyl Lewis X interactions. The polypeptide is Staphylococcal superantigen-like 3 (Staphylococcus aureus (strain Newman)).